We begin with the raw amino-acid sequence, 482 residues long: tRNA sulfurtransferase (482 aa).

The THUMP domain occupies 61–165; sequence LAIRDALTRI…DDRLLLIKGR (105 aa). ATP contacts are provided by residues 183–184, Lys-265, Gly-287, and Gln-296; that span reads LI. Cys-344 and Cys-456 form a disulfide bridge. The Rhodanese domain occupies 404–482; that stretch reads FGPNDVILDI…GFANVKVYRP (79 aa). The active-site Cysteine persulfide intermediate is the Cys-456.

It belongs to the ThiI family.

It localises to the cytoplasm. It catalyses the reaction [ThiI sulfur-carrier protein]-S-sulfanyl-L-cysteine + a uridine in tRNA + 2 reduced [2Fe-2S]-[ferredoxin] + ATP + H(+) = [ThiI sulfur-carrier protein]-L-cysteine + a 4-thiouridine in tRNA + 2 oxidized [2Fe-2S]-[ferredoxin] + AMP + diphosphate. It carries out the reaction [ThiS sulfur-carrier protein]-C-terminal Gly-Gly-AMP + S-sulfanyl-L-cysteinyl-[cysteine desulfurase] + AH2 = [ThiS sulfur-carrier protein]-C-terminal-Gly-aminoethanethioate + L-cysteinyl-[cysteine desulfurase] + A + AMP + 2 H(+). The protein operates within cofactor biosynthesis; thiamine diphosphate biosynthesis. Functionally, catalyzes the ATP-dependent transfer of a sulfur to tRNA to produce 4-thiouridine in position 8 of tRNAs, which functions as a near-UV photosensor. Also catalyzes the transfer of sulfur to the sulfur carrier protein ThiS, forming ThiS-thiocarboxylate. This is a step in the synthesis of thiazole, in the thiamine biosynthesis pathway. The sulfur is donated as persulfide by IscS. The protein is tRNA sulfurtransferase of Salmonella choleraesuis (strain SC-B67).